Here is a 551-residue protein sequence, read N- to C-terminus: Chaperonin GroEL (551 aa).

ATP contacts are provided by residues 30-33 (TLGP), Lys-51, 87-91 (DGTTT), Gly-415, 481-483 (NAA), and Asp-497.

It belongs to the chaperonin (HSP60) family. In terms of assembly, forms a cylinder of 14 subunits composed of two heptameric rings stacked back-to-back. Interacts with the co-chaperonin GroES.

The protein localises to the cytoplasm. It carries out the reaction ATP + H2O + a folded polypeptide = ADP + phosphate + an unfolded polypeptide.. Together with its co-chaperonin GroES, plays an essential role in assisting protein folding. The GroEL-GroES system forms a nano-cage that allows encapsulation of the non-native substrate proteins and provides a physical environment optimized to promote and accelerate protein folding. In Magnetococcus marinus (strain ATCC BAA-1437 / JCM 17883 / MC-1), this protein is Chaperonin GroEL.